Here is a 1021-residue protein sequence, read N- to C-terminus: MISLYQILAEKKKKKKNDLNIFAFSVFAIICFKFYSVNAIKLPQQEVDALQQIATTLGSKFWKFDAENCKIEMVGLTETPPPTAKQEIECECSPTNDTDCHVVKFAFKDHNLPGTLPQIVKLPYLREIDLAYNYINGTLPREWASSNLTFISLLVNRLSGEIPKEFGNSSLTYLDLESNAFSGTIPQELGNLVHLKKLLLSSNKLTGTLPASLARLQNMTDFRINDLQLSGTIPSYIQNWKQLERLEMIASGLTGPIPSVISVLSNLVNLRISDIRGPVQPFPSLKNVTGLTKIILKNCNISGQIPTYLSHLKELETLDLSFNKLVGGIPSFAQAENLRFIILAGNMLEGDAPDELLRDGITVDLSYNNLKWQSPESRACRPNMNLNLNLFQSTSTKKSSKFLPCIKDFKCPRYSSCLHVNCGGSDMYVKEKKTKELYEGDGNVEGGAAKYFLKPDANWGFSSTGDFMDDNNFQNTRFTMFVPASNQSDLYKSARIAPVSLTYFHACLENGNYTINLDFAEIRFTNDENYNRLGRRLFDIYIQEKLVAKDFNIMDEAKGAQTPIIKPLTAYVTNHFLTIRLSWAGKGTTRIPTRGVYGPIISAISIVSDSKPCERPKTGMSPGAYIAIGIGAPCLIIFILGFLWICGCLPRCGRQRKDPYEEELPSGTFTLRQIKFATDDFNPTNKIGEGGFGAVFKGVLADGRVVAVKQLSSKSRQGNREFLNEIGAISCLQHPNLVKLHGFCVERAQLLLAYEYMENNSLSSALFSPKHKQIPMDWPTRFKICCGIAKGLAFLHEESPLKFVHRDIKATNILLDKDLTPKISDFGLARLDEEEKTHISTKVAGTIGYMAPEYALWGYLTFKADVYSFGVLVLEIVAGITNSNFMGAGDSVCLLEFANECVESGHLMQVVDERLRPEVDRKEAEAVIKVALVCSSASPTDRPLMSEVVAMLEGLYPVPESTPGVSRNAGDIRFKAFKDLRRGMENNSKTQCSVKSYPSSSSTSSGAGQAVQERKKEESRP.

Residues 1-39 (MISLYQILAEKKKKKKNDLNIFAFSVFAIICFKFYSVNA) form the signal peptide. Over 41–625 (KLPQQEVDAL…PKTGMSPGAY (585 aa)) the chain is Extracellular. N96 is a glycosylation site (N-linked (GlcNAc...) asparagine). LRR repeat units follow at residues 99-122 (DCHV…IVKL) and 123-146 (PYLR…WASS). 3 N-linked (GlcNAc...) asparagine glycosylation sites follow: N136, N147, and N168. LRR repeat units lie at residues 148–168 (LTFI…EFGN), 169–192 (SSLT…LGNL), 193–216 (VHLK…LARL), 218–240 (NMTD…IQNW), and 241–266 (KQLE…VLSN). N218 is a glycosylation site (N-linked (GlcNAc...) asparagine). 2 N-linked (GlcNAc...) asparagine glycosylation sites follow: N287 and N300. LRR repeat units lie at residues 288-312 (VTGL…LSHL), 313-336 (KELE…AQAE), 338-359 (LRFI…LLRD), and 361-381 (ITVD…RACR). Residues N486 and N512 are each glycosylated (N-linked (GlcNAc...) asparagine). A helical transmembrane segment spans residues 626–646 (IAIGIGAPCLIIFILGFLWIC). Residues 647–1021 (GCLPRCGRQR…QERKKEESRP (375 aa)) lie on the Cytoplasmic side of the membrane. T670 bears the Phosphothreonine mark. Residues 681 to 956 (FNPTNKIGEG…EVVAMLEGLY (276 aa)) enclose the Protein kinase domain. Residues 687–695 (IGEGGFGAV) and K709 each bind ATP. Y754 is modified (phosphotyrosine). D807 serves as the catalytic Proton acceptor. The residue at position 840 (S840) is a Phosphoserine. T841 and T846 each carry phosphothreonine. Y854 is subject to Phosphotyrosine. The segment at 985–1021 (ENNSKTQCSVKSYPSSSSTSSGAGQAVQERKKEESRP) is disordered. Low complexity predominate over residues 993–1005 (SVKSYPSSSSTSS). The span at 1012-1021 (QERKKEESRP) shows a compositional bias: basic and acidic residues.

The protein belongs to the protein kinase superfamily. Ser/Thr protein kinase family. As to expression, mostly expressed in flower buds, especially in stamens.

The protein resides in the membrane. The catalysed reaction is L-seryl-[protein] + ATP = O-phospho-L-seryl-[protein] + ADP + H(+). It carries out the reaction L-threonyl-[protein] + ATP = O-phospho-L-threonyl-[protein] + ADP + H(+). This is Probable LRR receptor-like serine/threonine-protein kinase RFK1 (RKF1) from Arabidopsis thaliana (Mouse-ear cress).